A 210-amino-acid polypeptide reads, in one-letter code: 3-hexulose-6-phosphate synthase (210 aa).

Belongs to the HPS/KGPDC family. HPS subfamily.

It carries out the reaction D-ribulose 5-phosphate + formaldehyde = D-arabino-hex-3-ulose 6-phosphate. It participates in one-carbon metabolism; formaldehyde assimilation via RuMP pathway; D-fructose 6-phosphate from D-ribulose 5-phosphate and formaldehyde: step 1/2. Its function is as follows. Catalyzes the condensation of ribulose 5-phosphate with formaldehyde to form 3-hexulose 6-phosphate. The protein is 3-hexulose-6-phosphate synthase of Staphylococcus aureus (strain bovine RF122 / ET3-1).